The primary structure comprises 76 residues: MKLTCMMIVAVLFLTAWTVVTAVPHSNKRLANLYLKARHEMKNPEASNVDKRCFESWVACESPKRCCSHVCLFVCA.

A signal peptide spans 1–22 (MKLTCMMIVAVLFLTAWTVVTA). Residues 23–50 (VPHSNKRLANLYLKARHEMKNPEASNVD) constitute a propeptide that is removed on maturation. Disulfide bonds link Cys53–Cys67, Cys60–Cys71, and Cys66–Cys75.

This sequence belongs to the conotoxin O1 superfamily. Expressed by the venom duct.

Its subcellular location is the secreted. This is Conotoxin PnMKLT1-1111 from Conus pennaceus (Feathered cone).